A 330-amino-acid polypeptide reads, in one-letter code: MATH domain and coiled-coil domain-containing protein At3g58210 (330 aa).

Residues 6 to 133 (DNKFTWVIQN…NDELKIVAEV (128 aa)) enclose the MATH domain. Residues 263–314 (FKVDWLEKKLEEVKKKKEEEQTGEARIQELEEELKEFKQKCLDREAMLEKEK) adopt a coiled-coil conformation.

The protein is MATH domain and coiled-coil domain-containing protein At3g58210 of Arabidopsis thaliana (Mouse-ear cress).